We begin with the raw amino-acid sequence, 194 residues long: RNA polymerase II subunit A C-terminal domain phosphatase SSU72 like protein 5 (194 aa).

The protein belongs to the SSU72 phosphatase family.

The protein resides in the nucleus. It catalyses the reaction O-phospho-L-seryl-[protein] + H2O = L-seryl-[protein] + phosphate. It carries out the reaction O-phospho-L-threonyl-[protein] + H2O = L-threonyl-[protein] + phosphate. Functionally, protein phosphatase that catalyzes the dephosphorylation of the C-terminal domain of RNA polymerase II. Plays a role in RNA processing and termination. This is RNA polymerase II subunit A C-terminal domain phosphatase SSU72 like protein 5 from Homo sapiens (Human).